Consider the following 66-residue polypeptide: Large ribosomal subunit protein bL35 (66 aa).

Residues M1 to H26 show a composition bias toward basic residues. The tract at residues M1–T48 is disordered.

The protein belongs to the bacterial ribosomal protein bL35 family.

This Geobacillus sp. (strain WCH70) protein is Large ribosomal subunit protein bL35.